A 412-amino-acid chain; its full sequence is Gamma-glutamyl phosphate reductase (412 aa).

It belongs to the gamma-glutamyl phosphate reductase family.

It localises to the cytoplasm. The enzyme catalyses L-glutamate 5-semialdehyde + phosphate + NADP(+) = L-glutamyl 5-phosphate + NADPH + H(+). It participates in amino-acid biosynthesis; L-proline biosynthesis; L-glutamate 5-semialdehyde from L-glutamate: step 2/2. Catalyzes the NADPH-dependent reduction of L-glutamate 5-phosphate into L-glutamate 5-semialdehyde and phosphate. The product spontaneously undergoes cyclization to form 1-pyrroline-5-carboxylate. This Aliarcobacter butzleri (strain RM4018) (Arcobacter butzleri) protein is Gamma-glutamyl phosphate reductase.